Reading from the N-terminus, the 96-residue chain is Large ribosomal subunit protein eL21 (96 aa).

The protein belongs to the eukaryotic ribosomal protein eL21 family.

The polypeptide is Large ribosomal subunit protein eL21 (Methanothrix thermoacetophila (strain DSM 6194 / JCM 14653 / NBRC 101360 / PT) (Methanosaeta thermophila)).